The sequence spans 238 residues: Transcriptional activator HAC1 (238 aa).

Residues methionine 1 to glutamate 39 are disordered. The span at glutamate 7 to serine 24 shows a compositional bias: polar residues. Residues glutamate 39–alanine 102 form the bZIP domain. The segment at arginine 41 to arginine 61 is basic motif. The segment at leucine 67–leucine 74 is leucine-zipper. Residues glycine 115–aspartate 152 form a disordered region. A compositionally biased stretch (low complexity) spans serine 117–serine 134.

Belongs to the bZIP family. In terms of assembly, homodimer.

It localises to the nucleus. Transcriptional activator involved in the unfolded protein response (UPR) pathway. Recognizes and binds to the UPR element (UPRE) in the promoter of UPR-regulated genes such as KAR2, PDI1, EUG1 and FKB2. Increases the synthesis of endoplasmic reticulum-resident proteins required for protein folding as well as components of the secretory pathway. This is Transcriptional activator HAC1 (HAC1) from Saccharomyces cerevisiae (strain ATCC 204508 / S288c) (Baker's yeast).